Reading from the N-terminus, the 298-residue chain is Bifunctional protein FolD (298 aa).

NADP(+) contacts are provided by residues 166–168 (GRS), serine 191, and isoleucine 232.

Belongs to the tetrahydrofolate dehydrogenase/cyclohydrolase family. Homodimer.

It carries out the reaction (6R)-5,10-methylene-5,6,7,8-tetrahydrofolate + NADP(+) = (6R)-5,10-methenyltetrahydrofolate + NADPH. It catalyses the reaction (6R)-5,10-methenyltetrahydrofolate + H2O = (6R)-10-formyltetrahydrofolate + H(+). The protein operates within one-carbon metabolism; tetrahydrofolate interconversion. Functionally, catalyzes the oxidation of 5,10-methylenetetrahydrofolate to 5,10-methenyltetrahydrofolate and then the hydrolysis of 5,10-methenyltetrahydrofolate to 10-formyltetrahydrofolate. The chain is Bifunctional protein FolD from Maricaulis maris (strain MCS10) (Caulobacter maris).